The chain runs to 549 residues: Oxygen-dependent choline dehydrogenase (549 aa).

4-33 (DFVIIGSGSAGSAMASRLSEDGKHTVIVLE) lines the FAD pocket. Catalysis depends on His465, which acts as the Proton acceptor.

It belongs to the GMC oxidoreductase family. The cofactor is FAD.

The catalysed reaction is choline + A = betaine aldehyde + AH2. The enzyme catalyses betaine aldehyde + NAD(+) + H2O = glycine betaine + NADH + 2 H(+). Its pathway is amine and polyamine biosynthesis; betaine biosynthesis via choline pathway; betaine aldehyde from choline (cytochrome c reductase route): step 1/1. Functionally, involved in the biosynthesis of the osmoprotectant glycine betaine. Catalyzes the oxidation of choline to betaine aldehyde and betaine aldehyde to glycine betaine at the same rate. The chain is Oxygen-dependent choline dehydrogenase from Rhizobium rhizogenes (strain K84 / ATCC BAA-868) (Agrobacterium radiobacter).